Consider the following 356-residue polypeptide: sn-glycerol-3-phosphate import ATP-binding protein UgpC (356 aa).

In terms of domain architecture, ABC transporter spans 4 to 235 (LKLQAVTKSW…PASRFVASFI (232 aa)). ATP is bound at residue 37–44 (GPSGCGKS).

The protein belongs to the ABC transporter superfamily. sn-glycerol-3-phosphate importer (TC 3.A.1.1.3) family. The complex is composed of two ATP-binding proteins (UgpC), two transmembrane proteins (UgpA and UgpE) and a solute-binding protein (UgpB).

The protein localises to the cell inner membrane. It carries out the reaction sn-glycerol 3-phosphate(out) + ATP + H2O = sn-glycerol 3-phosphate(in) + ADP + phosphate + H(+). Part of the ABC transporter complex UgpBAEC involved in sn-glycerol-3-phosphate (G3P) import. Responsible for energy coupling to the transport system. The protein is sn-glycerol-3-phosphate import ATP-binding protein UgpC of Salmonella paratyphi A (strain ATCC 9150 / SARB42).